A 187-amino-acid chain; its full sequence is Superoxide dismutase [Cu-Zn] (187 aa).

A signal peptide spans 1-21 (MSLLPTGTLILLVLFILVLIT). The Cu cation site is built by histidine 76, histidine 78, and histidine 93. Residues cysteine 87 and cysteine 176 are joined by a disulfide bond. Histidine 93, histidine 101, histidine 110, and aspartate 113 together coordinate Zn(2+). Histidine 150 is a binding site for Cu cation.

This sequence belongs to the Cu-Zn superoxide dismutase family. It depends on Cu cation as a cofactor. Zn(2+) serves as cofactor.

The catalysed reaction is 2 superoxide + 2 H(+) = H2O2 + O2. In terms of biological role, destroys radicals which are normally produced within the cells and which are toxic to biological systems. The sequence is that of Superoxide dismutase [Cu-Zn] from Chlorella (PBCV-1).